A 340-amino-acid chain; its full sequence is Guanine nucleotide-binding protein G(I)/G(S)/G(T) subunit beta-3 (340 aa).

WD repeat units lie at residues 53 to 83 (GHLA…IVWD), 95 to 125 (LRSS…SIYS), 141 to 170 (AHTG…ALWD), 182 to 212 (GHTG…KLWD), 224 to 254 (GHES…RLFD), 268 to 298 (SIIC…NVWD), and 310 to 340 (GHDN…KIWN).

Belongs to the WD repeat G protein beta family. As to quaternary structure, g proteins are composed of 3 units, alpha, beta and gamma. Interacts with RASD2. Expressed at a high level in the heart and at a much lower level in the brain.

In terms of biological role, guanine nucleotide-binding proteins (G proteins) are involved as a modulator or transducer in various transmembrane signaling systems. The beta and gamma chains are required for the GTPase activity, for replacement of GDP by GTP, and for G protein-effector interaction. The chain is Guanine nucleotide-binding protein G(I)/G(S)/G(T) subunit beta-3 (Gnb3) from Rattus norvegicus (Rat).